We begin with the raw amino-acid sequence, 158 residues long: Large ribosomal subunit protein uL13 (158 aa).

Residues 129 to 158 (PEHGHHAQKPVALDFGAMNNKNGRGNNAGR) form a disordered region. A compositionally biased stretch (low complexity) spans 144–158 (GAMNNKNGRGNNAGR).

Belongs to the universal ribosomal protein uL13 family. As to quaternary structure, part of the 50S ribosomal subunit.

Its function is as follows. This protein is one of the early assembly proteins of the 50S ribosomal subunit, although it is not seen to bind rRNA by itself. It is important during the early stages of 50S assembly. This chain is Large ribosomal subunit protein uL13, found in Anaplasma phagocytophilum (strain HZ).